Reading from the N-terminus, the 72-residue chain is Gas vesicle protein A (72 aa).

The protein belongs to the gas vesicle GvpA family. As to quaternary structure, the gas vesicle shell is 2 nm thick and consists of a single layer of this protein. It forms helical ribs nearly perpendicular to the long axis of the vesicle.

It is found in the gas vesicle shell. Functionally, gas vesicles are hollow, gas filled proteinaceous nanostructures found in some microorganisms. During planktonic growth they allow positioning of the organism at a favorable depth for light or nutrient acquisition. GvpA forms the protein shell. The polypeptide is Gas vesicle protein A (Haloquadratum walsbyi (strain DSM 16790 / HBSQ001)).